The chain runs to 82 residues: RNA-binding protein Hfq (82 aa).

One can recognise a Sm domain in the interval 9 to 69 (DQLLNTARKD…ISTIIPAKII (61 aa)).

The protein belongs to the Hfq family. In terms of assembly, homohexamer.

Its function is as follows. RNA chaperone that binds small regulatory RNA (sRNAs) and mRNAs to facilitate mRNA translational regulation in response to envelope stress, environmental stress and changes in metabolite concentrations. Also binds with high specificity to tRNAs. This is RNA-binding protein Hfq from Leptospira borgpetersenii serovar Hardjo-bovis (strain L550).